The sequence spans 244 residues: INO80 complex subunit E (244 aa).

A coiled-coil region spans residues 10–54 (DYKKKYRNLKRKLKFLIYEHECFQEELRKAQRKLLKVSRDKSFLL). The segment at 63 to 236 (VDEDSSDSDA…SGDDALDGDD (174 aa)) is disordered. A compositionally biased stretch (low complexity) spans 99-115 (PPLGGAPSPSSLSLPPS). Residues 157 to 171 (RPKREKRPRLPRKLK) show a composition bias toward basic residues. Residues Lys-159 and Lys-171 each participate in a glycyl lysine isopeptide (Lys-Gly) (interchain with G-Cter in SUMO2) cross-link. Over residues 202–212 (PLPPPKMPPPT) the composition is skewed to pro residues.

Component of the chromatin remodeling INO80 complex; specifically part of a complex module associated with the N-terminus of INO80.

It is found in the nucleus. In terms of biological role, putative regulatory component of the chromatin remodeling INO80 complex which is involved in transcriptional regulation, DNA replication and probably DNA repair. The polypeptide is INO80 complex subunit E (INO80E) (Homo sapiens (Human)).